We begin with the raw amino-acid sequence, 212 residues long: Uridine kinase (212 aa).

13-20 (GGSGSGKT) lines the ATP pocket.

This sequence belongs to the uridine kinase family.

It is found in the cytoplasm. The enzyme catalyses uridine + ATP = UMP + ADP + H(+). The catalysed reaction is cytidine + ATP = CMP + ADP + H(+). It participates in pyrimidine metabolism; CTP biosynthesis via salvage pathway; CTP from cytidine: step 1/3. It functions in the pathway pyrimidine metabolism; UMP biosynthesis via salvage pathway; UMP from uridine: step 1/1. This chain is Uridine kinase, found in Bacillus cereus (strain G9842).